The primary structure comprises 356 residues: Probable cysteine protease RDL6 (356 aa).

A signal peptide spans 1 to 26 (MGFVRPVCMTILFLLIVFVLSAPSSA). The propeptide at 27 to 132 (MDLPATSGGH…RRYVPLAGDQ (106 aa)) is activation peptide. Residues N37 and N86 are each glycosylated (N-linked (GlcNAc...) asparagine). 3 cysteine pairs are disulfide-bonded: C154–C195, C188–C229, and C288–C339. The active site involves C157. Active-site residues include H294 and N314.

The protein belongs to the peptidase C1 family.

Functionally, probable thiol protease. In Arabidopsis thaliana (Mouse-ear cress), this protein is Probable cysteine protease RDL6.